Consider the following 926-residue polypeptide: Ubiquitin carboxyl-terminal hydrolase 4 (926 aa).

Positions 205–328 constitute a Rhodanese domain; sequence SQMEILLIDI…WLKSNYGSQV (124 aa). A Phosphoserine modification is found at Ser-443. In terms of domain architecture, USP spans 562–923; it reads VGLENLGNSC…NAYVLFYHRV (362 aa). Cys-571 functions as the Nucleophile in the catalytic mechanism. The Proton acceptor role is filled by His-880.

The protein belongs to the peptidase C19 family. In terms of assembly, interacts with BRO1, RFU1 and VPS32. Associates with the 26S proteasome.

The protein resides in the cytoplasm. The protein localises to the late endosome membrane. The enzyme catalyses Thiol-dependent hydrolysis of ester, thioester, amide, peptide and isopeptide bonds formed by the C-terminal Gly of ubiquitin (a 76-residue protein attached to proteins as an intracellular targeting signal).. Its activity is regulated as follows. RFU1 is an inhibitor of deubiquitination activity. Ubiquitin thioesterase that acts at the late endosome/prevacuolar compartment to recover ubiquitin from ubiquitinated membrane proteins en route to the vacuole. Also removes ubiquitin from soluble proteins targeted to proteasomes. Is essential to maintain a normal level of free ubiquitin. Involved in the ammonium-induced down-regulation of the GAP1 permease and the UME3 destruction in response to oxidative stress. Has a role in the RAD9 checkpoint response to TOP1 poisons. Required for promoting coordination of DNA replication and avoids DNA overreplication. The sequence is that of Ubiquitin carboxyl-terminal hydrolase 4 (DOA4) from Saccharomyces cerevisiae (strain YJM789) (Baker's yeast).